We begin with the raw amino-acid sequence, 373 residues long: tRNA-specific 2-thiouridylase MnmA (373 aa).

Residues 12–19 and Met-38 contribute to the ATP site; that span reads GMSGGVDS. The interaction with target base in tRNA stretch occupies residues 98–100; that stretch reads NPD. Catalysis depends on Cys-103, which acts as the Nucleophile. An intrachain disulfide couples Cys-103 to Cys-200. Position 127 (Gly-127) interacts with ATP. An interaction with tRNA region spans residues 150–152; that stretch reads KDQ. The active-site Cysteine persulfide intermediate is the Cys-200. Residues 312–313 form an interaction with tRNA region; the sequence is RY.

It belongs to the MnmA/TRMU family.

The protein localises to the cytoplasm. The catalysed reaction is S-sulfanyl-L-cysteinyl-[protein] + uridine(34) in tRNA + AH2 + ATP = 2-thiouridine(34) in tRNA + L-cysteinyl-[protein] + A + AMP + diphosphate + H(+). Functionally, catalyzes the 2-thiolation of uridine at the wobble position (U34) of tRNA, leading to the formation of s(2)U34. This is tRNA-specific 2-thiouridylase MnmA from Streptococcus agalactiae serotype III (strain NEM316).